The chain runs to 568 residues: Major capsid protein L1 (568 aa).

Composition is skewed to basic residues over residues 537–548 and 558–568; these read RRKPTIGPRKRS and PAKRVRVRARK. Positions 537–568 are disordered; that stretch reads RRKPTIGPRKRSAPSATTSSKPAKRVRVRARK.

The protein belongs to the papillomaviridae L1 protein family. As to quaternary structure, self-assembles into homopentamers. The capsid has an icosahedral symmetry and consists of 72 capsomers, with each capsomer being a pentamer of L1. Interacts with the minor capsid protein L2; this interaction is necessary for viral genome encapsidation. Interacts with protein E2; this interaction enhances E2-dependent replication and transcription activation.

The protein resides in the virion. Its subcellular location is the host nucleus. Forms an icosahedral capsid with a T=7 symmetry and a 50 nm diameter. The capsid is composed of 72 pentamers linked to each other by disulfide bonds and associated with L2 proteins. Binds to heparan sulfate proteoglycans on cell surface of basal layer keratinocytes to provide initial virion attachment. This binding mediates a conformational change in the virus capsid that facilitates efficient infection. The virion enters the host cell via endocytosis. During virus trafficking, L1 protein dissociates from the viral DNA and the genomic DNA is released to the host nucleus. The virion assembly takes place within the cell nucleus. Encapsulates the genomic DNA together with protein L2. This is Major capsid protein L1 from Human papillomavirus type 18.